The sequence spans 355 residues: Elongation factor Ts (355 aa).

Positions 82–85 are involved in Mg(2+) ion dislocation from EF-Tu; the sequence is TDFV.

The protein belongs to the EF-Ts family.

The protein localises to the cytoplasm. Associates with the EF-Tu.GDP complex and induces the exchange of GDP to GTP. It remains bound to the aminoacyl-tRNA.EF-Tu.GTP complex up to the GTP hydrolysis stage on the ribosome. This chain is Elongation factor Ts, found in Helicobacter acinonychis (strain Sheeba).